Reading from the N-terminus, the 422-residue chain is Dihydroorotase (422 aa).

Positions 59 and 61 each coordinate Zn(2+). Substrate is bound by residues 61 to 63 (HFR) and Asn-93. Asp-150, His-177, and His-230 together coordinate Zn(2+). Asn-276 provides a ligand contact to substrate. Position 303 (Asp-303) interacts with Zn(2+). Asp-303 is an active-site residue. His-307 contacts substrate.

Belongs to the metallo-dependent hydrolases superfamily. DHOase family. Class I DHOase subfamily. The cofactor is Zn(2+).

The enzyme catalyses (S)-dihydroorotate + H2O = N-carbamoyl-L-aspartate + H(+). Its pathway is pyrimidine metabolism; UMP biosynthesis via de novo pathway; (S)-dihydroorotate from bicarbonate: step 3/3. Its function is as follows. Catalyzes the reversible cyclization of carbamoyl aspartate to dihydroorotate. This chain is Dihydroorotase, found in Streptococcus pyogenes serotype M3 (strain ATCC BAA-595 / MGAS315).